Consider the following 475-residue polypeptide: uncharacterized protein (475 aa).

The helical transmembrane segment at 19–39 threads the bilayer; that stretch reads IKVGVFFVAILLILTGILLTI. Disordered regions lie at residues 55 to 79 and 330 to 350; these read GEYH…NATS and SSPF…PHKG. Residues 60 to 79 are compositionally biased toward polar residues; sequence LNTSPNENSTALQPDENATS. Residues 336–348 are compositionally biased toward basic residues; the sequence is NRRHPVTGRIRPH. H348 lines the Zn(2+) pocket.

In the central section; belongs to the OapA family. It in the C-terminal section; belongs to the peptidase M23B family. The cofactor is Zn(2+).

It localises to the cell membrane. This is an uncharacterized protein from Haemophilus influenzae (strain ATCC 51907 / DSM 11121 / KW20 / Rd).